Consider the following 505-residue polypeptide: ATP synthase subunit alpha (505 aa).

171 to 178 (GDRQTGKT) contributes to the ATP binding site.

It belongs to the ATPase alpha/beta chains family. F-type ATPases have 2 components, CF(1) - the catalytic core - and CF(0) - the membrane proton channel. CF(1) has five subunits: alpha(3), beta(3), gamma(1), delta(1), epsilon(1). CF(0) has three main subunits: a(1), b(2) and c(9-12). The alpha and beta chains form an alternating ring which encloses part of the gamma chain. CF(1) is attached to CF(0) by a central stalk formed by the gamma and epsilon chains, while a peripheral stalk is formed by the delta and b chains.

The protein resides in the cell inner membrane. The catalysed reaction is ATP + H2O + 4 H(+)(in) = ADP + phosphate + 5 H(+)(out). Produces ATP from ADP in the presence of a proton gradient across the membrane. The alpha chain is a regulatory subunit. In Campylobacter concisus (strain 13826), this protein is ATP synthase subunit alpha.